Consider the following 476-residue polypeptide: Eukaryotic translation initiation factor 3 subunit L (476 aa).

In terms of domain architecture, PCI spans 257-452; sequence DAIRMFSHIL…DLDYALENDL (196 aa).

It belongs to the eIF-3 subunit L family. Component of the eukaryotic translation initiation factor 3 (eIF-3) complex.

It localises to the cytoplasm. Its function is as follows. Component of the eukaryotic translation initiation factor 3 (eIF-3) complex, which is involved in protein synthesis of a specialized repertoire of mRNAs and, together with other initiation factors, stimulates binding of mRNA and methionyl-tRNAi to the 40S ribosome. The eIF-3 complex specifically targets and initiates translation of a subset of mRNAs involved in cell proliferation. This chain is Eukaryotic translation initiation factor 3 subunit L, found in Aspergillus fumigatus (strain CBS 144.89 / FGSC A1163 / CEA10) (Neosartorya fumigata).